Here is a 129-residue protein sequence, read N- to C-terminus: Probable protein cornichon homolog 2 (129 aa).

A run of 2 helical transmembrane segments spans residues 45 to 65 (FIVQ…FMTL) and 105 to 125 (LAYI…SALD).

The protein belongs to the cornichon family.

Its subcellular location is the membrane. The sequence is that of Probable protein cornichon homolog 2 from Arabidopsis thaliana (Mouse-ear cress).